The chain runs to 276 residues: Urease accessory protein UreD (276 aa).

This sequence belongs to the UreD family. As to quaternary structure, ureD, UreF and UreG form a complex that acts as a GTP-hydrolysis-dependent molecular chaperone, activating the urease apoprotein by helping to assemble the nickel containing metallocenter of UreC. The UreE protein probably delivers the nickel.

The protein resides in the cytoplasm. In terms of biological role, required for maturation of urease via the functional incorporation of the urease nickel metallocenter. The protein is Urease accessory protein UreD of Polaromonas naphthalenivorans (strain CJ2).